The primary structure comprises 137 residues: Nucleoside diphosphate kinase (137 aa).

ATP-binding residues include Lys9, Phe57, Arg85, Thr91, Arg102, and Asn112. His115 (pros-phosphohistidine intermediate) is an active-site residue.

Belongs to the NDK family. Homotetramer. Mg(2+) serves as cofactor.

The protein localises to the cytoplasm. The catalysed reaction is a 2'-deoxyribonucleoside 5'-diphosphate + ATP = a 2'-deoxyribonucleoside 5'-triphosphate + ADP. The enzyme catalyses a ribonucleoside 5'-diphosphate + ATP = a ribonucleoside 5'-triphosphate + ADP. Its function is as follows. Major role in the synthesis of nucleoside triphosphates other than ATP. The ATP gamma phosphate is transferred to the NDP beta phosphate via a ping-pong mechanism, using a phosphorylated active-site intermediate. The chain is Nucleoside diphosphate kinase from Campylobacter jejuni subsp. jejuni serotype O:2 (strain ATCC 700819 / NCTC 11168).